Consider the following 496-residue polypeptide: Glycerol kinase (496 aa).

Threonine 12 serves as a coordination point for ADP. The ATP site is built by threonine 12, threonine 13, and serine 14. Threonine 12 is a sn-glycerol 3-phosphate binding site. Residue arginine 16 participates in ADP binding. The sn-glycerol 3-phosphate site is built by arginine 82, glutamate 83, and tyrosine 134. Residues arginine 82, glutamate 83, and tyrosine 134 each coordinate glycerol. Residue histidine 230 is modified to Phosphohistidine; by HPr. Aspartate 244 provides a ligand contact to sn-glycerol 3-phosphate. Glycerol contacts are provided by aspartate 244 and glutamine 245. The ADP site is built by threonine 266 and glycine 309. ATP is bound by residues threonine 266, glycine 309, glutamine 313, and glycine 410. ADP contacts are provided by glycine 410 and asparagine 414.

Belongs to the FGGY kinase family. Homotetramer and homodimer (in equilibrium). Post-translationally, the phosphoenolpyruvate-dependent sugar phosphotransferase system (PTS), including enzyme I, and histidine-containing protein (HPr) are required for the phosphorylation, which leads to the activation of the enzyme.

It carries out the reaction glycerol + ATP = sn-glycerol 3-phosphate + ADP + H(+). It participates in polyol metabolism; glycerol degradation via glycerol kinase pathway; sn-glycerol 3-phosphate from glycerol: step 1/1. Activated by phosphorylation and inhibited by fructose 1,6-bisphosphate (FBP). In terms of biological role, key enzyme in the regulation of glycerol uptake and metabolism. Catalyzes the phosphorylation of glycerol to yield sn-glycerol 3-phosphate. The polypeptide is Glycerol kinase (Geobacillus sp. (strain WCH70)).